Consider the following 33-residue polypeptide: Protamine (33 aa).

The tract at residues 1–33 is disordered; that stretch reads MPRRRRSSSRPVRRRRRPRVSRRRRRRGGRRRR.

In terms of tissue distribution, testis.

Its subcellular location is the nucleus. The protein resides in the chromosome. In terms of biological role, protamines substitute for histones in the chromatin of sperm during the haploid phase of spermatogenesis. They compact sperm DNA into a highly condensed, stable and inactive complex. The polypeptide is Protamine (Oncorhynchus keta (Chum salmon)).